The chain runs to 508 residues: Photosystem II CP47 reaction center protein (508 aa).

A run of 6 helical transmembrane segments spans residues 21–36, 101–115, 140–156, 203–218, 237–252, and 457–472; these read AVHI…WAGS, IVFS…IWHW, GIHL…FGAF, IAAG…FHLS, VLSS…AFVV, and TFAL…HGAR.

It belongs to the PsbB/PsbC family. PsbB subfamily. PSII is composed of 1 copy each of membrane proteins PsbA, PsbB, PsbC, PsbD, PsbE, PsbF, PsbH, PsbI, PsbJ, PsbK, PsbL, PsbM, PsbT, PsbX, PsbY, PsbZ, Psb30/Ycf12, at least 3 peripheral proteins of the oxygen-evolving complex and a large number of cofactors. It forms dimeric complexes. The cofactor is Binds multiple chlorophylls. PSII binds additional chlorophylls, carotenoids and specific lipids..

The protein localises to the plastid. Its subcellular location is the chloroplast thylakoid membrane. One of the components of the core complex of photosystem II (PSII). It binds chlorophyll and helps catalyze the primary light-induced photochemical processes of PSII. PSII is a light-driven water:plastoquinone oxidoreductase, using light energy to abstract electrons from H(2)O, generating O(2) and a proton gradient subsequently used for ATP formation. This is Photosystem II CP47 reaction center protein from Lolium perenne (Perennial ryegrass).